The chain runs to 925 residues: Bifunctional uridylyltransferase/uridylyl-removing enzyme (925 aa).

Residues 1-382 are uridylyltransferase; that stretch reads MVLPTTKDAT…PPGAEVRRVP (382 aa). The tract at residues 383 to 738 is uridylyl-removing; sequence DSDDFIIDNN…VGFDEARGVT (356 aa). Positions 498–621 constitute an HD domain; sequence VDEHLIRCIG…VQSVERMKLL (124 aa). 2 ACT domains span residues 739–820 and 849–925; these read ELTI…DVMP and MIEV…NTAE.

This sequence belongs to the GlnD family. It depends on Mg(2+) as a cofactor.

It carries out the reaction [protein-PII]-L-tyrosine + UTP = [protein-PII]-uridylyl-L-tyrosine + diphosphate. It catalyses the reaction [protein-PII]-uridylyl-L-tyrosine + H2O = [protein-PII]-L-tyrosine + UMP + H(+). With respect to regulation, uridylyltransferase (UTase) activity is inhibited by glutamine, while glutamine activates uridylyl-removing (UR) activity. Modifies, by uridylylation and deuridylylation, the PII regulatory proteins (GlnB and homologs), in response to the nitrogen status of the cell that GlnD senses through the glutamine level. Under low glutamine levels, catalyzes the conversion of the PII proteins and UTP to PII-UMP and PPi, while under higher glutamine levels, GlnD hydrolyzes PII-UMP to PII and UMP (deuridylylation). Thus, controls uridylylation state and activity of the PII proteins, and plays an important role in the regulation of nitrogen assimilation and metabolism. The chain is Bifunctional uridylyltransferase/uridylyl-removing enzyme from Nitrobacter winogradskyi (strain ATCC 25391 / DSM 10237 / CIP 104748 / NCIMB 11846 / Nb-255).